The chain runs to 855 residues: Suppressor of tumorigenicity 14 protein (855 aa).

The interval 1–20 (MGSDRARKGGGGPKDFGAGL) is disordered. The Cytoplasmic segment spans residues 1–55 (MGSDRARKGGGGPKDFGAGLKYNSRHEKVNGLEEGVEFLPVNNVKKVEKHGPGRW). A helical; Signal-anchor for type II membrane protein transmembrane segment spans residues 56–76 (VVLAAVLIGLLLVLLGIGFLV). Topologically, residues 77-855 (WHLQYRDVRV…RDWIKENTGV (779 aa)) are extracellular. One can recognise an SEA domain in the interval 86–203 (VQKVFNGYMR…TSVVAFPTDS (118 aa)). An N-linked (GlcNAc...) asparagine glycan is attached at Asn109. A disulfide bond links Cys214 and Cys244. CUB domains are found at residues 214-334 (CSFG…FFQL) and 340-447 (CGGR…YLSY). N-linked (GlcNAc...) asparagine glycosylation is present at Asn302. 15 cysteine pairs are disulfide-bonded: Cys340–Cys366, Cys397–Cys410, Cys453–Cys464, Cys459–Cys477, Cys471–Cys486, Cys488–Cys501, Cys496–Cys514, Cys508–Cys523, Cys525–Cys537, Cys532–Cys550, Cys544–Cys559, Cys567–Cys579, Cys574–Cys593, Cys587–Cys602, and Cys641–Cys657. LDL-receptor class A domains are found at residues 452–487 (PCPG…LNCS), 487–524 (SCDA…QGCS), 524–560 (SCPA…ASCP), and 566–603 (TCTK…KDCD). Residue Asn485 is glycosylated (N-linked (GlcNAc...) asparagine). A Peptidase S1 domain is found at 615–854 (VVGGTDADEG…FRDWIKENTG (240 aa)). Active-site charge relay system residues include His656 and Asp711. Asn772 carries an N-linked (GlcNAc...) asparagine glycan. 2 disulfides stabilise this stretch: Cys776/Cys790 and Cys801/Cys830. Ser805 serves as the catalytic Charge relay system.

This sequence belongs to the peptidase S1 family. In terms of assembly, interacts with CDCP1. May interact with TMEFF1. Interacts with iripin-3, a serine protease inhibitor from Ixodes ricinus saliva. Interacts with iripin-1, a serine protease inhibitor from Ixodes ricinus saliva.

It is found in the membrane. The catalysed reaction is Cleaves various synthetic substrates with Arg or Lys at the P1 position and prefers small side-chain amino acids, such as Ala and Gly, at the P2 position.. Its function is as follows. Exhibits trypsin-like activity as defined by cleavage of synthetic substrates with Arg or Lys as the P1 site. Involved in the terminal differentiation of keratinocytes through prostasin (PRSS8) activation and filaggrin (FLG) processing. Proteolytically cleaves and therefore activates TMPRSS13. The protein is Suppressor of tumorigenicity 14 protein (ST14) of Homo sapiens (Human).